Consider the following 148-residue polypeptide: UPF0735 ACT domain-containing protein Dred_1164 (148 aa).

An ACT domain is found at 72 to 147 (TLALLMEHQP…GVREVRLVGQ (76 aa)).

This sequence belongs to the UPF0735 family.

The protein is UPF0735 ACT domain-containing protein Dred_1164 of Desulforamulus reducens (strain ATCC BAA-1160 / DSM 100696 / MI-1) (Desulfotomaculum reducens).